The sequence spans 150 residues: Large ribosomal subunit protein bL9 (150 aa).

Belongs to the bacterial ribosomal protein bL9 family.

Its function is as follows. Binds to the 23S rRNA. The polypeptide is Large ribosomal subunit protein bL9 (Streptococcus pneumoniae (strain CGSP14)).